The sequence spans 322 residues: Deoxyhypusine hydroxylase (322 aa).

Fe cation is bound by residues histidine 78, glutamate 79, histidine 111, and glutamate 112. 4 HEAT-like PBS-type repeats span residues 109 to 135, 203 to 229, 234 to 260, and 267 to 293; these read VRHEAAEALGALGDKDSLEDLEKCLKN, LRYRAMFRLRDIGTDEAVLALASGFND, FKHEIAYVFGQMGSTAAVPSLTEVLGR, and VRHEAAEALGAIASEDALPILKQYLND. 4 residues coordinate Fe cation: histidine 236, glutamate 237, histidine 269, and glutamate 270.

The protein belongs to the deoxyhypusine hydroxylase family. The cofactor is Fe(2+).

The protein resides in the cytoplasm. Its subcellular location is the nucleus. The enzyme catalyses [eIF5A protein]-deoxyhypusine + AH2 + O2 = [eIF5A protein]-hypusine + A + H2O. It participates in protein modification; eIF5A hypusination. Catalyzes the hydroxylation of the N(6)-(4-aminobutyl)-L-lysine intermediate to form hypusine, an essential post-translational modification only found in mature eIF-5A factor. This chain is Deoxyhypusine hydroxylase, found in Candida glabrata (strain ATCC 2001 / BCRC 20586 / JCM 3761 / NBRC 0622 / NRRL Y-65 / CBS 138) (Yeast).